Consider the following 403-residue polypeptide: D-galactonate dehydratase family member RspA (403 aa).

Substrate is bound by residues asparagine 37 and histidine 122. Tyrosine 159 functions as the Proton donor/acceptor in the catalytic mechanism. Residue aspartate 211 participates in Mg(2+) binding. The active-site Proton donor/acceptor is the histidine 213. The Mg(2+) site is built by glutamate 237 and glutamate 263. 5 residues coordinate substrate: glutamate 263, arginine 284, histidine 313, aspartate 317, and glutamate 340.

The protein belongs to the mandelate racemase/muconate lactonizing enzyme family. GalD subfamily. It depends on Mg(2+) as a cofactor.

It carries out the reaction D-mannonate = 2-dehydro-3-deoxy-D-gluconate + H2O. The enzyme catalyses D-gluconate = 2-dehydro-3-deoxy-D-gluconate + H2O. Has low dehydratase activity with D-mannonate and D-gluconate, suggesting that these are not physiological substrates and that it has no significant role in the in vivo degradation of these compounds. Has no detectable activity with a panel of 70 other acid sugars (in vitro). This Halomonas elongata (strain ATCC 33173 / DSM 2581 / NBRC 15536 / NCIMB 2198 / 1H9) protein is D-galactonate dehydratase family member RspA (rspA).